Here is a 403-residue protein sequence, read N- to C-terminus: Protein STRICTOSIDINE SYNTHASE-LIKE 13 (403 aa).

Positions Met-1–Gly-42 are cleaved as a signal peptide. N-linked (GlcNAc...) asparagine glycosylation is found at Asn-66 and Asn-206.

The protein belongs to the strictosidine synthase family.

It localises to the vacuole. Functionally, required for the exine formation during pollen development. This is Protein STRICTOSIDINE SYNTHASE-LIKE 13 from Arabidopsis thaliana (Mouse-ear cress).